Consider the following 279-residue polypeptide: Energy-coupling factor transporter ATP-binding protein EcfA1 (279 aa).

Positions 6–240 constitute an ABC transporter domain; that stretch reads VRLEHVFYKY…ADAMRAIGLG (235 aa). 40–47 lines the ATP pocket; that stretch reads GHNGSGKS.

Belongs to the ABC transporter superfamily. Energy-coupling factor EcfA family. In terms of assembly, forms a stable energy-coupling factor (ECF) transporter complex composed of 2 membrane-embedded substrate-binding proteins (S component), 2 ATP-binding proteins (A component) and 2 transmembrane proteins (T component).

The protein localises to the cell membrane. In terms of biological role, ATP-binding (A) component of a common energy-coupling factor (ECF) ABC-transporter complex. Unlike classic ABC transporters this ECF transporter provides the energy necessary to transport a number of different substrates. This is Energy-coupling factor transporter ATP-binding protein EcfA1 from Listeria innocua serovar 6a (strain ATCC BAA-680 / CLIP 11262).